The primary structure comprises 294 residues: Cytidine deaminase (294 aa).

2 consecutive CMP/dCMP-type deaminase domains span residues 48–168 and 186–294; these read DEDA…FGPK and LTGD…VLLA. Position 89-91 (89-91) interacts with substrate; the sequence is NME. His102 serves as a coordination point for Zn(2+). The active-site Proton donor is the Glu104. Cys129 and Cys132 together coordinate Zn(2+).

This sequence belongs to the cytidine and deoxycytidylate deaminase family. Homodimer. Zn(2+) is required as a cofactor.

It carries out the reaction cytidine + H2O + H(+) = uridine + NH4(+). The catalysed reaction is 2'-deoxycytidine + H2O + H(+) = 2'-deoxyuridine + NH4(+). In terms of biological role, this enzyme scavenges exogenous and endogenous cytidine and 2'-deoxycytidine for UMP synthesis. The protein is Cytidine deaminase of Escherichia coli (strain K12).